A 116-amino-acid chain; its full sequence is Iron-sulfur cluster insertion protein ErpA (116 aa).

Iron-sulfur cluster contacts are provided by cysteine 44, cysteine 108, and cysteine 110.

This sequence belongs to the HesB/IscA family. As to quaternary structure, homodimer. Iron-sulfur cluster serves as cofactor.

Functionally, required for insertion of 4Fe-4S clusters for at least IspG. In Francisella tularensis subsp. mediasiatica (strain FSC147), this protein is Iron-sulfur cluster insertion protein ErpA.